The chain runs to 267 residues: Orotidine 5'-phosphate decarboxylase (267 aa).

Substrate is bound by residues D37, 59 to 61 (KTH), 91 to 100 (DRKFADIGNT), Y217, and R235. K93 (proton donor) is an active-site residue.

This sequence belongs to the OMP decarboxylase family.

It carries out the reaction orotidine 5'-phosphate + H(+) = UMP + CO2. Its pathway is pyrimidine metabolism; UMP biosynthesis via de novo pathway; UMP from orotate: step 2/2. The chain is Orotidine 5'-phosphate decarboxylase (URA3) from Kluyveromyces marxianus (Yeast).